The sequence spans 431 residues: Phosphomethylpyrimidine synthase (431 aa).

Substrate contacts are provided by residues Asn66, Met95, Tyr124, His163, 185–187 (SRG), 226–229 (DGLR), and Glu265. His269 serves as a coordination point for Zn(2+). Residue Tyr292 coordinates substrate. His333 lines the Zn(2+) pocket. Cys408, Cys411, and Cys415 together coordinate [4Fe-4S] cluster.

Belongs to the ThiC family. [4Fe-4S] cluster is required as a cofactor.

It catalyses the reaction 5-amino-1-(5-phospho-beta-D-ribosyl)imidazole + S-adenosyl-L-methionine = 4-amino-2-methyl-5-(phosphooxymethyl)pyrimidine + CO + 5'-deoxyadenosine + formate + L-methionine + 3 H(+). Its pathway is cofactor biosynthesis; thiamine diphosphate biosynthesis. In terms of biological role, catalyzes the synthesis of the hydroxymethylpyrimidine phosphate (HMP-P) moiety of thiamine from aminoimidazole ribotide (AIR) in a radical S-adenosyl-L-methionine (SAM)-dependent reaction. This chain is Phosphomethylpyrimidine synthase, found in Dehalococcoides mccartyi (strain CBDB1).